A 315-amino-acid polypeptide reads, in one-letter code: Beta-ketoacyl-[acyl-carrier-protein] synthase III 2 (315 aa).

Active-site residues include Cys-113 and His-241. Residues 242 to 246 (QANLR) form an ACP-binding region. The active site involves Asn-271.

This sequence belongs to the thiolase-like superfamily. FabH family. Homodimer.

The protein resides in the cytoplasm. The enzyme catalyses malonyl-[ACP] + acetyl-CoA + H(+) = 3-oxobutanoyl-[ACP] + CO2 + CoA. The protein operates within lipid metabolism; fatty acid biosynthesis. Functionally, catalyzes the condensation reaction of fatty acid synthesis by the addition to an acyl acceptor of two carbons from malonyl-ACP. Catalyzes the first condensation reaction which initiates fatty acid synthesis and may therefore play a role in governing the total rate of fatty acid production. Possesses both acetoacetyl-ACP synthase and acetyl transacylase activities. Its substrate specificity determines the biosynthesis of branched-chain and/or straight-chain of fatty acids. This chain is Beta-ketoacyl-[acyl-carrier-protein] synthase III 2, found in Streptomyces avermitilis (strain ATCC 31267 / DSM 46492 / JCM 5070 / NBRC 14893 / NCIMB 12804 / NRRL 8165 / MA-4680).